A 633-amino-acid chain; its full sequence is Endosomal/prevacuolar sodium/hydrogen exchanger (633 aa).

The first 21 residues, 1-21 (MLSKVLLNIAFKVLLTTAKRA), serve as a signal peptide directing secretion. At 22–61 (VDPDDDDELLPSPDLPGSDDPIAGDPDVDLNPVTEEMFSS) the chain is on the lumenal side. Residues 25–44 (DDDDELLPSPDLPGSDDPIA) are disordered. The segment covering 31–42 (LPSPDLPGSDDP) has biased composition (low complexity). Residues 62 to 82 (WALFIMLLLLISALWSSYYLT) form a helical membrane-spanning segment. Topologically, residues 83-85 (QKR) are cytoplasmic. The helical transmembrane segment at 86-106 (IRAVHETVLSIFYGMVIGLII) threads the bilayer. Residues 107–117 (RMSPGHYIQDT) lie on the Lumenal side of the membrane. A helical membrane pass occupies residues 118–138 (VTFNSSYFFNVLLPPIILNSG). The short motif at 124-133 (YFFNVLLPPI) is the Amiloride-binding element. The Cytoplasmic portion of the chain corresponds to 139 to 152 (YELNQVNFFNNMLS). A helical membrane pass occupies residues 153 to 173 (ILIFAIPGTFISAVVIGIILY). Residues 174–189 (IWTFLGLESIDISFAD) lie on the Lumenal side of the membrane. A helical membrane pass occupies residues 190–211 (AMSVGATLSATDPVTILSIFNA). The Cytoplasmic portion of the chain corresponds to 212–217 (YKVDPK). Residues 218 to 238 (LYTIIFGESLLNDAISIVMFE) traverse the membrane as a helical segment. Over 239 to 258 (TCQKFHGQPATFSSVFEGAG) the chain is Lumenal. The chain crosses the membrane as a helical span at residues 259–279 (LFLMTFSVSLLIGVLIGILVA). At 280-288 (LLLKHTHIR) the chain is on the cytoplasmic side. The chain crosses the membrane as a helical span at residues 289–308 (RYPQIESCLILLIAYESYFF). The Lumenal portion of the chain corresponds to 309–313 (SNGCH). The chain crosses the membrane as a helical span at residues 314-333 (MSGIVSLLFCGITLKHYAYY). The Cytoplasmic segment spans residues 334-344 (NMSRRSQITIK). The helical transmembrane segment at 345 to 364 (YIFQLLARLSENFIFIYLGL) threads the bilayer. Topologically, residues 365–376 (ELFTEVELVYKP) are cytoplasmic. A helical membrane pass occupies residues 377–397 (LLIIVAAISICVARWCAVFPL). The Lumenal portion of the chain corresponds to 398–431 (SQFVNWIYRVKTIRSMSGITGENISVPDEIPYNY). Residue asparagine 420 is glycosylated (N-linked (GlcNAc...) asparagine). The chain crosses the membrane as a helical span at residues 432–452 (QMMTFWAGLRGAVGVALALGI). At 453–457 (QGEYK) the chain is on the cytoplasmic side. A helical membrane pass occupies residues 458 to 478 (FTLLATVLVVVVLTVIIFGGT). At threonine 490 the chain carries Phosphothreonine. The residue at position 494 (serine 494) is a Phosphoserine. Threonine 498 is modified (phosphothreonine). Serine 499 carries the post-translational modification Phosphoserine. Asparagine 515, asparagine 550, and asparagine 563 each carry an N-linked (GlcNAc...) asparagine glycan. The segment at 553-578 (TTGGNTFGGLNETENTSPNPARSSMD) is disordered. Positions 564–574 (ETENTSPNPAR) are enriched in polar residues. Serine 569 is subject to Phosphoserine.

It belongs to the monovalent cation:proton antiporter 1 (CPA1) transporter (TC 2.A.36) family. In terms of assembly, interacts with CYP6.

Its subcellular location is the endosome membrane. The protein resides in the prevacuolar compartment membrane. Functionally, endosomal/prevacuolar electroneutral Na(+)/H(+) exchanger which mediates intracellular sequestration of Na(+) cations, regulates vacuolar pH and contributes to osmotolerance following sudden exposure to hyperosmotic media. Also contributes to the postdiauxic/stationary phase resistance to osmotic stress and allows for the continued growth of cells until the acquired osmotolerance response can occur. Involved in hygromycin resistance probably through its influence on the electrochemical proton gradient affecting secondarily the entrance of hygromycin. Mediates pH-dependent vesicle trafficking out of the endosome. Contributes to K(+) sequestration and homeostasis. In Saccharomyces cerevisiae (strain ATCC 204508 / S288c) (Baker's yeast), this protein is Endosomal/prevacuolar sodium/hydrogen exchanger (NHX1).